The sequence spans 209 residues: NFKLVIVGDGGTGKTTFVKRHLTGEFEKKYEPTIGVEVHPLDFFTNCGKIRFYCWDTAGQEKFGGLRDGYYIHGQCAIIMFDVTARLTYKNVPTWHRDLCRVCENIPIVLCGNKVDVKNRQVKAKQVTFHRKKNLQYYEISAKSNYNFEKPFLYLARKLAGDPNLHFVESPALAPPEVQIDLAAQQQHEAELAQAASQPLPDDDDDAFD.

In terms of domain architecture, Small GTPase Ran-type spans N1–D162. D9–T16 contributes to the GTP binding site. Residues K28–V36 form a switch-I region. GTP contacts are provided by residues G59, N113 to D116, and S141 to K143. The interval G59–Q75 is switch-II. Residues Q187 to A196 show a composition bias toward low complexity. The interval Q187 to D209 is disordered.

Belongs to the small GTPase superfamily. Ran family. Found in a nuclear export complex with RanGTP, exportin and pre-miRNA.

The protein localises to the nucleus. In terms of biological role, GTP-binding protein involved in nucleocytoplasmic transport. Required for the import of protein into the nucleus and also for RNA export. Involved in chromatin condensation and control of cell cycle. This Lotus japonicus (Lotus corniculatus var. japonicus) protein is GTP-binding nuclear protein Ran1A (RAN1A).